A 235-amino-acid polypeptide reads, in one-letter code: Probable carboxylesterase Os04g0669600 (235 aa).

Active-site charge relay system residues include S113, D167, and H199.

This sequence belongs to the AB hydrolase superfamily. AB hydrolase 2 family.

Its function is as follows. Possesses carboxylesterase activity in vitro. The sequence is that of Probable carboxylesterase Os04g0669600 from Oryza sativa subsp. japonica (Rice).